The following is a 750-amino-acid chain: Photosystem I P700 chlorophyll a apoprotein A1 (750 aa).

The next 8 membrane-spanning stretches (helical) occupy residues 70–93, 156–179, 195–219, 291–309, 346–369, 385–411, 433–455, and 531–549; these read VFSA…FHGA, LYST…FHYH, LNHH…HVSL, TVHH…GHMY, WHAQ…HHMY, LSLF…IFMV, AIVS…LYIH, and FLVH…LILL. Cys-573 and Cys-582 together coordinate [4Fe-4S] cluster. A run of 2 helical transmembrane segments spans residues 589–610 and 664–686; these read HVFL…HFSW and LSAY…MFLF. His-675 serves as a coordination point for chlorophyll a'. Chlorophyll a contacts are provided by Met-683 and Tyr-691. A phylloquinone-binding site is contributed by Trp-692. The chain crosses the membrane as a helical span at residues 724-744; the sequence is AVGVAHYLLGGIATTWAFFLA.

The protein belongs to the PsaA/PsaB family. As to quaternary structure, the PsaA/B heterodimer binds the P700 chlorophyll special pair and subsequent electron acceptors. PSI consists of a core antenna complex that captures photons, and an electron transfer chain that converts photonic excitation into a charge separation. The eukaryotic PSI reaction center is composed of at least 11 subunits. It depends on P700 is a chlorophyll a/chlorophyll a' dimer, A0 is one or more chlorophyll a, A1 is one or both phylloquinones and FX is a shared 4Fe-4S iron-sulfur center. as a cofactor.

It localises to the plastid. It is found in the chloroplast thylakoid membrane. It carries out the reaction reduced [plastocyanin] + hnu + oxidized [2Fe-2S]-[ferredoxin] = oxidized [plastocyanin] + reduced [2Fe-2S]-[ferredoxin]. Its function is as follows. PsaA and PsaB bind P700, the primary electron donor of photosystem I (PSI), as well as the electron acceptors A0, A1 and FX. PSI is a plastocyanin-ferredoxin oxidoreductase, converting photonic excitation into a charge separation, which transfers an electron from the donor P700 chlorophyll pair to the spectroscopically characterized acceptors A0, A1, FX, FA and FB in turn. Oxidized P700 is reduced on the lumenal side of the thylakoid membrane by plastocyanin. In Huperzia lucidula (Shining clubmoss), this protein is Photosystem I P700 chlorophyll a apoprotein A1.